We begin with the raw amino-acid sequence, 725 residues long: Gamma-tubulin complex component 5 (725 aa).

Residues 222–246 (TENEEKMSDNASASSGSDQGPSSRQ) are disordered. Over residues 232 to 244 (ASASSGSDQGPSS) the composition is skewed to low complexity.

This sequence belongs to the TUBGCP family. Component of the gamma-tubulin ring complex (gTuRC) consisting of TUBGCP2, TUBGCP3, TUBGCP4, TUBGCP5 and TUBGCP6 and gamma-tubulin TUBG1 or TUBG2. TUBGCP2, TUBGCP3, TUBGCP4, TUBGCP5 and TUBGCP6 assemble in a 5:5:2:1:1 stoichiometry; each is associated with a gamma-tubulin, thereby arranging 14 gamma-tubulins in a helical manner. Gamma-tubulin at the first position is blocked by TUBGCP3 at the last position, allowing 13 protafilaments to grow into a microtubule. The gTuRC (via TUBGCP3 and TUBGCP6) interacts with ACTB and MZT1; the interactions form a luminal bridge that stabilizes the initial structure during complex assembly. The gTuRC (via TUBGCP2) interacts with MZT2A/MZT2B and CDK5RAP2 (via CM1 motif); the interactions play a role in gTuRC activation.

The protein resides in the cytoplasm. It is found in the cytoskeleton. The protein localises to the microtubule organizing center. It localises to the centrosome. Component of the gamma-tubulin ring complex (gTuRC) which mediates microtubule nucleation. The gTuRC regulates the minus-end nucleation of alpha-beta tubulin heterodimers that grow into microtubule protafilaments, a critical step in centrosome duplication and spindle formation. This is Gamma-tubulin complex component 5 (TUBGCP5) from Macaca fascicularis (Crab-eating macaque).